We begin with the raw amino-acid sequence, 890 residues long: Alanine--tRNA ligase (890 aa).

The Zn(2+) site is built by His567, His571, Cys680, and His684.

This sequence belongs to the class-II aminoacyl-tRNA synthetase family. It depends on Zn(2+) as a cofactor.

Its subcellular location is the cytoplasm. The catalysed reaction is tRNA(Ala) + L-alanine + ATP = L-alanyl-tRNA(Ala) + AMP + diphosphate. Its function is as follows. Catalyzes the attachment of alanine to tRNA(Ala) in a two-step reaction: alanine is first activated by ATP to form Ala-AMP and then transferred to the acceptor end of tRNA(Ala). Also edits incorrectly charged Ser-tRNA(Ala) and Gly-tRNA(Ala) via its editing domain. In Ruegeria pomeroyi (strain ATCC 700808 / DSM 15171 / DSS-3) (Silicibacter pomeroyi), this protein is Alanine--tRNA ligase.